Reading from the N-terminus, the 232-residue chain is Ribose-5-phosphate isomerase A (232 aa).

Residues 31–34 (TGST), 87–90 (DGAD), and 100–103 (KGGG) contribute to the substrate site. Residue glutamate 109 is the Proton acceptor of the active site. Lysine 127 contributes to the substrate binding site.

Belongs to the ribose 5-phosphate isomerase family. Homodimer.

The enzyme catalyses aldehydo-D-ribose 5-phosphate = D-ribulose 5-phosphate. The protein operates within carbohydrate degradation; pentose phosphate pathway; D-ribose 5-phosphate from D-ribulose 5-phosphate (non-oxidative stage): step 1/1. In terms of biological role, catalyzes the reversible conversion of ribose-5-phosphate to ribulose 5-phosphate. In Bifidobacterium longum (strain NCC 2705), this protein is Ribose-5-phosphate isomerase A.